The sequence spans 525 residues: BTB/POZ domain-containing protein At1g50280 (525 aa).

The 75-residue stretch at 5 to 79 (NDLKINLNGQ…CYHNGEILID (75 aa)) folds into the BTB domain. The NPH3 domain occupies 200–466 (EWWFEDMTNL…IEALKSRCGN (267 aa)).

The protein belongs to the NPH3 family.

The protein operates within protein modification; protein ubiquitination. Its function is as follows. May act as a substrate-specific adapter of an E3 ubiquitin-protein ligase complex (CUL3-RBX1-BTB) which mediates the ubiquitination and subsequent proteasomal degradation of target proteins. In Arabidopsis thaliana (Mouse-ear cress), this protein is BTB/POZ domain-containing protein At1g50280.